An 88-amino-acid chain; its full sequence is MAEKTFKVVSDSGIHARPATILVQTASKFNSEIQLEYNGKTVNLKSIMGVMSLGIPKGATIKITAEGADAAEAMAALTDTLAKEGLAE.

Residues 1–88 (MAEKTFKVVS…DTLAKEGLAE (88 aa)) enclose the HPr domain. Phosphoserine is present on Ser12. Catalysis depends on His15, which acts as the Pros-phosphohistidine intermediate. Ser46 carries the phosphoserine; by HPrK/P modification.

This sequence belongs to the HPr family.

The protein localises to the cytoplasm. Its activity is regulated as follows. Phosphorylation on Ser-46 inhibits the phosphoryl transfer from enzyme I to HPr. Functionally, general (non sugar-specific) component of the phosphoenolpyruvate-dependent sugar phosphotransferase system (sugar PTS). This major carbohydrate active-transport system catalyzes the phosphorylation of incoming sugar substrates concomitantly with their translocation across the cell membrane. The phosphoryl group from phosphoenolpyruvate (PEP) is transferred to the phosphoryl carrier protein HPr by enzyme I. Phospho-HPr then transfers it to the PTS EIIA domain. P-Ser-HPr interacts with the catabolite control protein A (CcpA), forming a complex that binds to DNA at the catabolite response elements cre, operator sites preceding a large number of catabolite-regulated genes. Thus, P-Ser-HPr is a corepressor in carbon catabolite repression (CCR), a mechanism that allows bacteria to coordinate and optimize the utilization of available carbon sources. P-Ser-HPr also plays a role in inducer exclusion, in which it probably interacts with several non-PTS permeases and inhibits their transport activity. The polypeptide is Phosphocarrier protein HPr (ptsH) (Geobacillus stearothermophilus (Bacillus stearothermophilus)).